The following is a 209-amino-acid chain: Protocatechuate 3,4-dioxygenase alpha chain (209 aa).

A 3,4-dihydroxybenzoate-binding site is contributed by arginine 142.

The protein belongs to the intradiol ring-cleavage dioxygenase family. The enzyme is an oligomer of 12 copies of the alpha and beta chains. The cofactor is Fe(3+).

The catalysed reaction is 3,4-dihydroxybenzoate + O2 = 3-carboxy-cis,cis-muconate + 2 H(+). It participates in aromatic compound metabolism; beta-ketoadipate pathway; 3-carboxy-cis,cis-muconate from 3,4-dihydroxybenzoate: step 1/1. Plays an essential role in the utilization of numerous aromatic and hydroaromatic compounds via the beta-ketoadipate pathway. This Acinetobacter baylyi (strain ATCC 33305 / BD413 / ADP1) protein is Protocatechuate 3,4-dioxygenase alpha chain (pcaG).